Consider the following 162-residue polypeptide: MKKQLQRKVDQVATLTDKFKMAKTIVMFEYKGLSVANLTSLRSELHKENIDLKVYKNNITRRAAINAGFDALEPSLTGPLAVAISYDDVVAPAKIINEFAKKNKTVVITSGVIEAKVADQVAIMALANLPSRETLLTQLAAGLLMPVKEIAIGLNMLLETKE.

Belongs to the universal ribosomal protein uL10 family. As to quaternary structure, part of the ribosomal stalk of the 50S ribosomal subunit. The N-terminus interacts with L11 and the large rRNA to form the base of the stalk. The C-terminus forms an elongated spine to which L12 dimers bind in a sequential fashion forming a multimeric L10(L12)X complex.

Forms part of the ribosomal stalk, playing a central role in the interaction of the ribosome with GTP-bound translation factors. The chain is Large ribosomal subunit protein uL10 from Acholeplasma laidlawii (strain PG-8A).